The following is a 125-amino-acid chain: Fluoride-specific ion channel FluC (125 aa).

Transmembrane regions (helical) follow at residues 6 to 26 (GFIA…SGLV), 34 to 54 (FPWG…LVWE), 68 to 88 (AVLL…IFES), and 98 to 118 (LALL…LFAG). Residues G76 and T79 each contribute to the Na(+) site.

The protein belongs to the fluoride channel Fluc/FEX (TC 1.A.43) family.

The protein localises to the cell inner membrane. It carries out the reaction fluoride(in) = fluoride(out). Its activity is regulated as follows. Na(+) is not transported, but it plays an essential structural role and its presence is essential for fluoride channel function. In terms of biological role, fluoride-specific ion channel. Important for reducing fluoride concentration in the cell, thus reducing its toxicity. The polypeptide is Fluoride-specific ion channel FluC (Solidesulfovibrio magneticus (strain ATCC 700980 / DSM 13731 / RS-1) (Desulfovibrio magneticus)).